Here is a 580-residue protein sequence, read N- to C-terminus: Lysine--tRNA ligase (580 aa).

A 'HIGH' region motif is present at residues 43 to 51 (PSGPIHLGN). The segment at 178 to 209 (KAPAKKSQKPLDEAELEAAEGSGAAAEDDGSS) is disordered. Low complexity predominate over residues 196–209 (AEGSGAAAEDDGSS). The short motif at 325–329 (KMSSS) is the 'KMSKS' region element.

Belongs to the class-I aminoacyl-tRNA synthetase family.

The protein localises to the cytoplasm. The catalysed reaction is tRNA(Lys) + L-lysine + ATP = L-lysyl-tRNA(Lys) + AMP + diphosphate. The chain is Lysine--tRNA ligase (lysS) from Streptomyces coelicolor (strain ATCC BAA-471 / A3(2) / M145).